The chain runs to 497 residues: Serine/threonine-protein phosphatase 2A 56 kDa regulatory subunit beta isoform (497 aa).

Low complexity predominate over residues 1–19 (METKLPPASTPTSPSSPGL). Disordered stretches follow at residues 1–55 (METK…YQSN) and 473–497 (QGTQ…GGQS). Phosphoserine is present on residues Ser-32, Ser-35, Ser-44, Ser-46, Ser-47, and Ser-48. Residues 34-45 (RSLRRARPRRSH) show a composition bias toward basic residues.

It belongs to the phosphatase 2A regulatory subunit B56 family. As to quaternary structure, component of the serine/threonine-protein phosphatase 2A complex (PP2A). This complex consists of a common heterodimeric core enzyme, composed of a 36 kDa catalytic subunit (subunit C) and a 65 kDa constant scaffold subunit (PR65 or subunit A), that associates with a variety of regulatory subunits. Proteins that associate with the core dimer include three families of regulatory subunits B (the R2/B/PR55/B55, R3/B''/PR72/PR130/PR59 and R5/B'/B56 families), the 48 kDa variable regulatory subunit, viral proteins, and cell signaling molecules. Interacts with SGO1. Interacts with AKT1. Post-translationally, ubiquitinated by CUL3-KLHL15 complex; this modification leads to proteasomal degradation.

Its subcellular location is the cytoplasm. As the regulatory component of the serine/threonine-protein phosphatase 2A (PP2A) holoenzyme, modulates substrate specificity, subcellular localization, and responsiveness to phosphorylation. The phosphorylated form mediates the interaction between PP2A and AKT1, leading to AKT1 dephosphorylation. In Mus musculus (Mouse), this protein is Serine/threonine-protein phosphatase 2A 56 kDa regulatory subunit beta isoform (Ppp2r5b).